The primary structure comprises 158 residues: Ribosome maturation factor RimP (158 aa).

It belongs to the RimP family.

Its subcellular location is the cytoplasm. Required for maturation of 30S ribosomal subunits. In Leuconostoc mesenteroides subsp. mesenteroides (strain ATCC 8293 / DSM 20343 / BCRC 11652 / CCM 1803 / JCM 6124 / NCDO 523 / NBRC 100496 / NCIMB 8023 / NCTC 12954 / NRRL B-1118 / 37Y), this protein is Ribosome maturation factor RimP.